Here is a 498-residue protein sequence, read N- to C-terminus: Oligopeptide transport system permease protein AmiC (498 aa).

Transmembrane regions (helical) follow at residues 12 to 32 (SLVS…TLVP), 279 to 299 (MIVS…ALAV), 316 to 336 (LSTG…VYIV), 359 to 379 (SYVL…AIWI), 415 to 435 (MVPL…GATL), and 461 to 481 (VVGL…LGDI). An ABC transmembrane type-1 domain is found at 280–479 (IVSSAITGLI…CISIFSRLLG (200 aa)).

The protein belongs to the binding-protein-dependent transport system permease family. OppBC subfamily.

It localises to the cell membrane. Its function is as follows. Part of the binding-protein-dependent transport system for oligopeptides; probably responsible for the translocation of the substrate across the membrane. In Streptococcus pneumoniae serotype 4 (strain ATCC BAA-334 / TIGR4), this protein is Oligopeptide transport system permease protein AmiC (amiC).